Reading from the N-terminus, the 612-residue chain is Alpha-glycerophosphate oxidase (612 aa).

21–49 contacts FAD; the sequence is DLLIIGGGITGAGVALQAAASGLDTGLIE. The segment covering 398–408 has biased composition (basic and acidic residues); sequence VETSTSEKELD. The interval 398–418 is disordered; it reads VETSTSEKELDPSAVSRGSSF.

The protein belongs to the FAD-dependent glycerol-3-phosphate dehydrogenase family. It depends on FAD as a cofactor.

It localises to the cytoplasm. It carries out the reaction sn-glycerol 3-phosphate + O2 = dihydroxyacetone phosphate + H2O2. This is Alpha-glycerophosphate oxidase (glpO) from Streptococcus pyogenes serotype M3 (strain ATCC BAA-595 / MGAS315).